A 344-amino-acid chain; its full sequence is Homoserine O-acetyltransferase (344 aa).

Cys-142 functions as the Acyl-thioester intermediate in the catalytic mechanism. Lys-163 and Ser-192 together coordinate substrate. The active-site Proton acceptor is His-235. Glu-237 is an active-site residue. Arg-249 is a binding site for substrate.

It belongs to the MetA family.

The protein localises to the cytoplasm. It carries out the reaction L-homoserine + acetyl-CoA = O-acetyl-L-homoserine + CoA. Its pathway is amino-acid biosynthesis; L-methionine biosynthesis via de novo pathway; O-acetyl-L-homoserine from L-homoserine: step 1/1. Its function is as follows. Transfers an acetyl group from acetyl-CoA to L-homoserine, forming acetyl-L-homoserine. This chain is Homoserine O-acetyltransferase, found in Bifidobacterium adolescentis (strain ATCC 15703 / DSM 20083 / NCTC 11814 / E194a).